The sequence spans 239 residues: Probable transcriptional regulatory protein BPUM_0743 (239 aa).

This sequence belongs to the TACO1 family. YeeN subfamily.

It localises to the cytoplasm. This Bacillus pumilus (strain SAFR-032) protein is Probable transcriptional regulatory protein BPUM_0743.